The sequence spans 354 residues: Dihydroorotate dehydrogenase (quinone) (354 aa).

Residues 70 to 74 (AGFDK) and Thr-94 each bind FMN. Lys-74 is a binding site for substrate. Residue 119 to 123 (NAMGF) participates in substrate binding. Residues Asn-148 and Asn-181 each coordinate FMN. Asn-181 provides a ligand contact to substrate. Ser-184 acts as the Nucleophile in catalysis. Asn-186 serves as a coordination point for substrate. 2 residues coordinate FMN: Lys-217 and Thr-245. 246 to 247 (NT) serves as a coordination point for substrate. Residues Gly-265, Gly-294, and 315–316 (YS) each bind FMN.

The protein belongs to the dihydroorotate dehydrogenase family. Type 2 subfamily. As to quaternary structure, monomer. FMN is required as a cofactor.

It localises to the cell membrane. It carries out the reaction (S)-dihydroorotate + a quinone = orotate + a quinol. It participates in pyrimidine metabolism; UMP biosynthesis via de novo pathway; orotate from (S)-dihydroorotate (quinone route): step 1/1. Its function is as follows. Catalyzes the conversion of dihydroorotate to orotate with quinone as electron acceptor. In Sulfurovum sp. (strain NBC37-1), this protein is Dihydroorotate dehydrogenase (quinone).